Reading from the N-terminus, the 257-residue chain is Uroporphyrinogen-III C-methyltransferase (257 aa).

Residues P11, 87-89, 117-118, and M170 contribute to the S-adenosyl-L-homocysteine site; these read GGD and TS.

The protein belongs to the precorrin methyltransferase family.

It catalyses the reaction uroporphyrinogen III + 2 S-adenosyl-L-methionine = precorrin-2 + 2 S-adenosyl-L-homocysteine + H(+). Its pathway is cofactor biosynthesis; adenosylcobalamin biosynthesis; precorrin-2 from uroporphyrinogen III: step 1/1. It functions in the pathway porphyrin-containing compound metabolism; siroheme biosynthesis; precorrin-2 from uroporphyrinogen III: step 1/1. In terms of biological role, catalyzes the two successive C-2 and C-7 methylation reactions involved in the conversion of uroporphyrinogen III to precorrin-2 via the intermediate formation of precorrin-1. It is a step in the biosynthesis of both cobalamin (vitamin B12) and siroheme. The protein is Uroporphyrinogen-III C-methyltransferase (sumT) of Bacillus subtilis (strain 168).